A 362-amino-acid polypeptide reads, in one-letter code: Peptide chain release factor 1 (362 aa).

N5-methylglutamine is present on glutamine 235.

It belongs to the prokaryotic/mitochondrial release factor family. In terms of processing, methylated by PrmC. Methylation increases the termination efficiency of RF1.

Its subcellular location is the cytoplasm. Peptide chain release factor 1 directs the termination of translation in response to the peptide chain termination codons UAG and UAA. The chain is Peptide chain release factor 1 from Acinetobacter baumannii (strain AYE).